A 657-amino-acid polypeptide reads, in one-letter code: Glycogen debranching enzyme (657 aa).

Asp336 (nucleophile) is an active-site residue. The active-site Proton donor is the Glu371. The segment covering 458 to 467 (NEANGEENRD) has biased composition (basic and acidic residues). The segment at 458-479 (NEANGEENRDGTNNNYSNNHGK) is disordered.

The protein belongs to the glycosyl hydrolase 13 family.

It carries out the reaction Hydrolysis of (1-&gt;6)-alpha-D-glucosidic linkages to branches with degrees of polymerization of three or four glucose residues in limit dextrin.. Its pathway is glycan degradation; glycogen degradation. Removes maltotriose and maltotetraose chains that are attached by 1,6-alpha-linkage to the limit dextrin main chain, generating a debranched limit dextrin. The protein is Glycogen debranching enzyme of Escherichia coli O8 (strain IAI1).